A 339-amino-acid polypeptide reads, in one-letter code: Anthranilate phosphoribosyltransferase (339 aa).

5-phospho-alpha-D-ribose 1-diphosphate contacts are provided by residues G81, 84–85, S89, 91–94, 109–117, and A121; these read GD, NVSS, and KHGNRALSS. Residue G81 participates in anthranilate binding. Mg(2+) is bound at residue S93. N112 provides a ligand contact to anthranilate. R167 is a binding site for anthranilate. D225 and E226 together coordinate Mg(2+).

This sequence belongs to the anthranilate phosphoribosyltransferase family. Homodimer. It depends on Mg(2+) as a cofactor.

It catalyses the reaction N-(5-phospho-beta-D-ribosyl)anthranilate + diphosphate = 5-phospho-alpha-D-ribose 1-diphosphate + anthranilate. The protein operates within amino-acid biosynthesis; L-tryptophan biosynthesis; L-tryptophan from chorismate: step 2/5. Its function is as follows. Catalyzes the transfer of the phosphoribosyl group of 5-phosphorylribose-1-pyrophosphate (PRPP) to anthranilate to yield N-(5'-phosphoribosyl)-anthranilate (PRA). This is Anthranilate phosphoribosyltransferase from Brucella abortus (strain S19).